Consider the following 321-residue polypeptide: tRNA(Ile)-lysidine synthase (321 aa).

30-35 lines the ATP pocket; sequence SGGSDS.

This sequence belongs to the tRNA(Ile)-lysidine synthase family.

The protein resides in the cytoplasm. The enzyme catalyses cytidine(34) in tRNA(Ile2) + L-lysine + ATP = lysidine(34) in tRNA(Ile2) + AMP + diphosphate + H(+). Its function is as follows. Ligates lysine onto the cytidine present at position 34 of the AUA codon-specific tRNA(Ile) that contains the anticodon CAU, in an ATP-dependent manner. Cytidine is converted to lysidine, thus changing the amino acid specificity of the tRNA from methionine to isoleucine. This chain is tRNA(Ile)-lysidine synthase, found in Chlamydia muridarum (strain MoPn / Nigg).